A 266-amino-acid chain; its full sequence is Gasdermin bGSDM (266 aa).

Transmembrane regions (beta stranded) follow at residues 65-81 (FSGQ…GADL), 93-113 (EDKL…FAYE), 162-181 (QFTV…EAAV), and 187-203 (AHAS…SLQT). The interval 248–266 (GEEDFSVQPLQAPSGLLKL) is C-terminal region.

This sequence belongs to the bacterial gasdermin family. In terms of assembly, monomer. Forms large, homooligomeric ring-shaped pores when inserted in membranes.

It is found in the cytoplasm. The protein resides in the cell membrane. With respect to regulation, the full-length protein before cleavage is inactive: intramolecular interactions between the N-terminal domain and the C-terminal region mediate autoinhibition. The pyroptosis-like-inducing activity is carried by the released N-terminal domain (Gasdermin bGSDM, N-terminus). Its function is as follows. Precursor of a pore-forming protein involved in defense against bacteriophages. Cleavage of this precursor by its dedicated protease releases the active moiety (gasdermin bGSDM, N-terminus) which inserts into membranes, forming pores and triggering cell death. Expression of bGSDM and the neighboring protease gene (Ga0307981_100051430) is highly toxic in E.coli. Pore-forming protein that causes membrane permeabilization via a pyroptosis-like activity. This is the active form which makes ring-like pores with an interior pore diameter of 130-190 Angstroms, when integrated in liposomes. The sequence is that of Gasdermin bGSDM from Unknown prokaryotic organism.